The chain runs to 799 residues: Homeobox protein engrailed (799 aa).

Disordered stretches follow at residues 189-331, 369-444, 554-664, and 678-705; these read LPSR…DATK, GNFL…SLRQ, HPFL…DKAK, and SDRP…RTAF. The segment covering 210 to 222 has biased composition (polar residues); the sequence is QSPSTSIRSNLVS. Basic and acidic residues-rich tracts occupy residues 228-239 and 246-256; these read SRRDDQETSDSC and RAINDSERYDV. 2 stretches are compositionally biased toward polar residues: residues 284–299 and 377–401; these read LNLT…QLFH and HTFQ…SSPD. Residues 416–431 are compositionally biased toward low complexity; sequence ESLSSPSSSSSSSRSS. Basic and acidic residues-rich tracts occupy residues 608–619 and 629–648; these read DQKKRSRDESAS and VHLK…EKGN. The segment at residues 698–757 is a DNA-binding region (homeobox); it reads EKRPRTAFTNDQLQRLKREFDECRYLTETRRKNLADELGLTESQIKIWFQNKRAKIKKSV.

It belongs to the engrailed homeobox family. Expressed in the dorsal ectoderm of early gastrulae in a band corresponding to the peripheral area of the presumptive shell gland. Also expressed at four points along the posterior ectoderm. In late gastrulae, it is predominantly expressed in the peripheral ectoderm of the shell gland and in spots at the posterior end behind the presumptive foot. Expressed in late trochophore larvae at four points behind the foot, at two locations at the base of the foot and in the peripheral ectoderm of the shell gland.

It is found in the nucleus. In terms of biological role, may be involved in shell and shell gland formation during development. This Lymnaea stagnalis (Great pond snail) protein is Homeobox protein engrailed.